Reading from the N-terminus, the 714-residue chain is Fatty acid oxidation complex subunit alpha (714 aa).

The enoyl-CoA hydratase stretch occupies residues 1 to 190 (MEMASAFTLN…KLGLVDDVVP (190 aa)). The segment at 306–714 (APLNSVGILG…FWKTTATDLQ (409 aa)) is 3-hydroxyacyl-CoA dehydrogenase.

The protein in the N-terminal section; belongs to the enoyl-CoA hydratase/isomerase family. This sequence in the central section; belongs to the 3-hydroxyacyl-CoA dehydrogenase family. In terms of assembly, heterotetramer of two alpha chains (FadJ) and two beta chains (FadI).

The protein resides in the cytoplasm. It carries out the reaction a (3S)-3-hydroxyacyl-CoA = a (2E)-enoyl-CoA + H2O. The catalysed reaction is a 4-saturated-(3S)-3-hydroxyacyl-CoA = a (3E)-enoyl-CoA + H2O. It catalyses the reaction a (3S)-3-hydroxyacyl-CoA + NAD(+) = a 3-oxoacyl-CoA + NADH + H(+). The enzyme catalyses (3S)-3-hydroxybutanoyl-CoA = (3R)-3-hydroxybutanoyl-CoA. Its pathway is lipid metabolism; fatty acid beta-oxidation. In terms of biological role, catalyzes the formation of a hydroxyacyl-CoA by addition of water on enoyl-CoA. Also exhibits 3-hydroxyacyl-CoA epimerase and 3-hydroxyacyl-CoA dehydrogenase activities. The protein is Fatty acid oxidation complex subunit alpha of Escherichia coli (strain ATCC 8739 / DSM 1576 / NBRC 3972 / NCIMB 8545 / WDCM 00012 / Crooks).